The primary structure comprises 216 residues: Ras-like protein (216 aa).

G16–S23 is a GTP binding site. The Effector region motif lies at Y38–Y46. GTP contacts are provided by residues D63–Q67 and N122–D125. S-palmitoyl cysteine attachment occurs at residues C209 and C210. At C213 the chain carries Cysteine methyl ester. C213 carries the S-geranylgeranyl cysteine lipid modification. Residues V214 to L216 constitute a propeptide, removed in mature form.

The protein belongs to the small GTPase superfamily. Ras family.

It localises to the cell membrane. It catalyses the reaction GTP + H2O = GDP + phosphate + H(+). Alternates between an inactive form bound to GDP and an active form bound to GTP. Activated by a guanine nucleotide-exchange factor (GEF) and inactivated by a GTPase-activating protein (GAP). The chain is Ras-like protein (RAS1) from Cryptococcus neoformans var. neoformans serotype D (strain B-3501A) (Filobasidiella neoformans).